Consider the following 460-residue polypeptide: UDP-N-acetylmuramoylalanine--D-glutamate ligase (460 aa).

Position 115–121 (115–121) interacts with ATP; the sequence is GTNGKTT.

It belongs to the MurCDEF family.

The protein localises to the cytoplasm. It catalyses the reaction UDP-N-acetyl-alpha-D-muramoyl-L-alanine + D-glutamate + ATP = UDP-N-acetyl-alpha-D-muramoyl-L-alanyl-D-glutamate + ADP + phosphate + H(+). It functions in the pathway cell wall biogenesis; peptidoglycan biosynthesis. Cell wall formation. Catalyzes the addition of glutamate to the nucleotide precursor UDP-N-acetylmuramoyl-L-alanine (UMA). The sequence is that of UDP-N-acetylmuramoylalanine--D-glutamate ligase from Salinibacter ruber (strain DSM 13855 / M31).